The sequence spans 86 residues: Kappa-theraphotoxin-Cg1a 5 (86 aa).

Positions 1 to 21 are cleaved as a signal peptide; the sequence is MKVSVLITLAVLGVMFVWTSA. A propeptide spanning residues 22–50 is cleaved from the precursor; sequence AELEERGSDQRDSPAWLKSMERIFQSEER. 3 disulfide bridges follow: Cys52–Cys66, Cys59–Cys71, and Cys65–Cys78. Phenylalanine amide is present on Phe84.

The protein belongs to the neurotoxin 10 (Hwtx-1) family. 28 (Jztx-11) subfamily. In terms of tissue distribution, expressed by the venom gland.

The protein localises to the secreted. This toxin acts as a voltage-dependent gating-modifier. It inhibits the sodium conductance (IC(50)=124 nM) and slows the fast inactivation (EC(50)=1180 nM) of Nav1.5/SCN5A. It significantly shifts the activation to more depolarized voltages and decreases the deactivation of Nav1.5 currents upon extreme depolarization, but only slightly affects voltage-dependence of steady-state inactivation. In addition, this toxin causes an approximately five-fold decrease in the rate of recovery from inactivation and an approximately 1.9-fold reduction in the closed-state inactivation rate. This toxin integrates the functions of site 3 toxins (alpha-scorpion toxins) with site 4 toxins (beta-scorpion and spider toxins) by targeting multiple sites on Nav1.5. Also shows inhibition of voltage-gated potassium channels (5 uM completely inhibits Kv2.1/KCNB1, whereas 5 uM moderately inhibits Kv4.2/KCND2 Kv4.1/KCND1 channels). The protein is Kappa-theraphotoxin-Cg1a 5 of Chilobrachys guangxiensis (Chinese earth tiger tarantula).